The sequence spans 226 residues: Beta-casein (226 aa).

Residues arginine 1–glutamate 51 are disordered. Phosphoserine is present on serine 9. Threonine 12 carries the post-translational modification Phosphothreonine. Serine 15, serine 17, serine 18, and serine 25 each carry phosphoserine. The span at serine 28–glutamate 51 shows a compositional bias: basic and acidic residues.

The protein belongs to the beta-casein family. Post-translationally, there are at least three different forms found in milk, with varying degrees of phosphorylation. These include form 5-P which is phosphorylated at three sites, this form is present in low amounts, form 6-P which is phosphorylated at six sites, and form 7-P which is phosphorylated at seven sites. Mammary gland specific. Secreted in milk.

The protein localises to the secreted. Its function is as follows. Important role in determination of the surface properties of the casein micelles. The sequence is that of Beta-casein from Equus asinus (Donkey).